A 249-amino-acid polypeptide reads, in one-letter code: Mediator of RNA polymerase II transcription subunit 6 (249 aa).

Positions Ser-156 to Asn-173 are enriched in basic and acidic residues. 2 disordered regions span residues Ser-156 to Leu-177 and Ile-198 to Lys-249. The segment covering Thr-217–Thr-228 has biased composition (polar residues). Basic and acidic residues predominate over residues Ile-233–Lys-249.

This sequence belongs to the Mediator complex subunit 6 family. In terms of assembly, component of the Mediator complex, which includes at least MED4, MED6, MED14, MED17, MED18, MED20, MED21, MED23, MED24, MED27, MED30 and MED31.

It localises to the nucleus. Component of the Mediator complex, a coactivator involved in the regulated transcription of nearly all RNA polymerase II-dependent genes. Mediator functions as a bridge to convey information from gene-specific regulatory proteins to the basal RNA polymerase II transcription machinery. Mediator is recruited to promoters by direct interactions with regulatory proteins and serves as a scaffold for the assembly of a functional preinitiation complex with RNA polymerase II and the general transcription factors. Required for activated transcription of the MtnA, MtnB and MtnD genes. The polypeptide is Mediator of RNA polymerase II transcription subunit 6 (MED6) (Drosophila melanogaster (Fruit fly)).